A 215-amino-acid polypeptide reads, in one-letter code: Outer-membrane lipoprotein LolB (215 aa).

A signal peptide spans 1–21; sequence MLIPKKYYLLIILLSNCLLAS. Residue C22 is the site of N-palmitoyl cysteine attachment. A lipid anchor (S-diacylglycerol cysteine) is attached at C22.

Belongs to the LolB family. In terms of assembly, monomer.

The protein localises to the cell outer membrane. Functionally, plays a critical role in the incorporation of lipoproteins in the outer membrane after they are released by the LolA protein. This Baumannia cicadellinicola subsp. Homalodisca coagulata protein is Outer-membrane lipoprotein LolB.